We begin with the raw amino-acid sequence, 206 residues long: MEESILRMHDKTTLKNMAFNRGLSRRGHNGRNASRMRKQDFIDFIMVQNHRDQSAVLGSDFLGDDMIRIFQEFIMDETFTFNPFIHLMGTIKNSTSKSPVSNQPSPEEDEPIPDLTLKPLEPCTKCECTTCMKNSIKQEENLKVHQNILNLESKIMCVVCQANVRNVVFVPCNHLATCISCSANPLMPKKCPMCRKGCKTTIKIFF.

Positions 95–105 are enriched in polar residues; that stretch reads TSKSPVSNQPS. Residues 95 to 114 form a disordered region; it reads TSKSPVSNQPSPEEDEPIPD. An RING-type zinc finger spans residues 157-195; it reads CVVCQANVRNVVFVPCNHLATCISCSANPLMPKKCPMCR.

This sequence belongs to the IIV-6 193R family.

In terms of biological role, plays a role early in infection by preventing host cell apoptosis. The polypeptide is Putative apoptosis inhibitor 021L (Aedes vexans (Inland floodwater mosquito)).